Here is a 186-residue protein sequence, read N- to C-terminus: Putative 5'(3')-deoxyribonucleotidase (186 aa).

This sequence belongs to the 5'(3')-deoxyribonucleotidase family. The cofactor is Mg(2+).

Dephosphorylates the 5' and 2'(3')-phosphates of deoxyribonucleotides. This Bordetella parapertussis (strain 12822 / ATCC BAA-587 / NCTC 13253) protein is Putative 5'(3')-deoxyribonucleotidase.